The following is a 123-amino-acid chain: Large ribosomal subunit protein bL12 (123 aa).

It belongs to the bacterial ribosomal protein bL12 family. As to quaternary structure, homodimer. Part of the ribosomal stalk of the 50S ribosomal subunit. Forms a multimeric L10(L12)X complex, where L10 forms an elongated spine to which 2 to 4 L12 dimers bind in a sequential fashion. Binds GTP-bound translation factors.

Its function is as follows. Forms part of the ribosomal stalk which helps the ribosome interact with GTP-bound translation factors. Is thus essential for accurate translation. The chain is Large ribosomal subunit protein bL12 from Finegoldia magna (strain ATCC 29328 / DSM 20472 / WAL 2508) (Peptostreptococcus magnus).